The chain runs to 165 residues: Anterior gradient protein 3 (165 aa).

An N-terminal signal peptide occupies residues 1–20 (MLHSALALCLLLITVSSNLA). Positions 162-165 (QSEL) match the Prevents secretion from ER motif.

This sequence belongs to the AGR family. As to quaternary structure, interacts with LYPD3 and DAG1 (alphaDAG1). As to expression, expressed in the ciliated cells of the airway epithelium. Not detected in the mucous cells.

Its subcellular location is the endoplasmic reticulum. The protein resides in the cytoplasm. Its function is as follows. Required for calcium-mediated regulation of ciliary beat frequency and mucociliary clearance in the airway. Might be involved in the regulation of intracellular calcium in tracheal epithelial cells. In Mus musculus (Mouse), this protein is Anterior gradient protein 3.